The chain runs to 174 residues: Ribulose bisphosphate carboxylase small subunit, chloroplastic (174 aa).

The transit peptide at 1-45 directs the protein to the chloroplast; that stretch reads MAPTVMASSATSVAPFQGLKSTAGLPVSRRSNASSASVSNGGRIR.

This sequence belongs to the RuBisCO small chain family. As to quaternary structure, heterohexadecamer of 8 large and 8 small subunits.

Its subcellular location is the plastid. It localises to the chloroplast. Its function is as follows. RuBisCO catalyzes two reactions: the carboxylation of D-ribulose 1,5-bisphosphate, the primary event in carbon dioxide fixation, as well as the oxidative fragmentation of the pentose substrate. Both reactions occur simultaneously and in competition at the same active site. Although the small subunit is not catalytic it is essential for maximal activity. This is Ribulose bisphosphate carboxylase small subunit, chloroplastic from Hordeum vulgare (Barley).